Consider the following 389-residue polypeptide: Chalcone synthase E (389 aa).

Cysteine 164 is an active-site residue.

The protein belongs to the thiolase-like superfamily. Chalcone/stilbene synthases family.

It carries out the reaction (E)-4-coumaroyl-CoA + 3 malonyl-CoA + 3 H(+) = 2',4,4',6'-tetrahydroxychalcone + 3 CO2 + 4 CoA. It participates in secondary metabolite biosynthesis; flavonoid biosynthesis. Functionally, the primary product of this enzyme is 4,2',4',6'-tetrahydroxychalcone (also termed naringenin-chalcone or chalcone) which can under specific conditions spontaneously isomerize into naringenin. This chain is Chalcone synthase E (CHSE), found in Ipomoea nil (Japanese morning glory).